The sequence spans 303 residues: Putative ring-cleaving dioxygenase MhqE (303 aa).

2 consecutive VOC domains span residues 5–129 (GLHH…IMED) and 150–266 (GMKG…IATD). Positions 8, 215, and 262 each coordinate Fe cation.

Belongs to the extradiol ring-cleavage dioxygenase family. Fe(2+) is required as a cofactor.

It localises to the cytoplasm. Putative ring-cleavage dioxygenase that may contribute to the degradation of aromatic compounds. This Bacillus subtilis (strain 168) protein is Putative ring-cleaving dioxygenase MhqE (mhqE).